The sequence spans 173 residues: Alpha-crystallin A chain (173 aa).

Position 1 is an N-acetylmethionine (methionine 1). Residues methionine 1–glutamate 63 are required for complex formation with BFSP1 and BFSP2. A Deamidated glutamine; partial modification is found at glutamine 6. Serine 45 is modified (phosphoserine). At glutamine 50 the chain carries Deamidated glutamine; partial. The 113-residue stretch at leucine 52–glutamate 164 folds into the sHSP domain. At lysine 99 the chain carries N6-acetyllysine. Positions 100, 102, and 107 each coordinate Zn(2+). Serine 122 is subject to Phosphoserine. Asparagine 123 bears the Deamidated asparagine; partial mark. The interval proline 144–serine 173 is disordered. Positions serine 153–proline 167 are enriched in basic and acidic residues. Histidine 154 is a Zn(2+) binding site. O-linked (GlcNAc) serine glycosylation occurs at serine 162.

The protein belongs to the small heat shock protein (HSP20) family. Heteromer composed of three CRYAA and one CRYAB subunits. Inter-subunit bridging via zinc ions enhances stability, which is crucial as there is no protein turn over in the lens. Can also form homodimers and homotetramers (dimers of dimers) which serve as the building blocks of homooligomers. Within homooligomers, the zinc-binding motif is created from residues of 3 different molecules. His-100 and Glu-102 from one molecule are ligands of the zinc ion, and His-107 and His-154 residues from additional molecules complete the site with tetrahedral coordination geometry. Part of a complex required for lens intermediate filament formation composed of BFSP1, BFSP2 and CRYAA. Acetylation at Lys-99 may increase chaperone activity. Post-translationally, undergoes age-dependent proteolytical cleavage at the C-terminus.

It localises to the cytoplasm. It is found in the nucleus. Functionally, contributes to the transparency and refractive index of the lens. Acts as a chaperone, preventing aggregation of various proteins under a wide range of stress conditions. Required for the correct formation of lens intermediate filaments as part of a complex composed of BFSP1, BFSP2 and CRYAA. In Didelphis virginiana (North American opossum), this protein is Alpha-crystallin A chain (CRYAA).